The chain runs to 420 residues: MKNYKAIGKIGEGTFSEVMKMQSLRDGNYYACKQMKQHFESIEQVNSLREIQALRRLNPHPNILALHEVVFDRKSGSLALICELMDMNIYELIRGRRHPLSEKKIMLYMYQLCKSLDHMHRNGIFHRDVKPENILVKQDVLKLGDFGSCRSVYSKQPYTEYISTRWYRAPECLLTDGFYTYKMDLWSAGCVFYEIASLQPLFPGVNELDQISKIHDVIGTPCQKTLTKFKQSRAMSFDFPFKKGSGIPLLTANLSPQCLSLLHAMVAYDPDERIAAHQALQHPYFQVQRAAETQTLAKHRRAFCPKFSMVPESSSHNWSFSQEGRKQKQSLRHEEGHARRQGPTSLMELPKLRLSGMTKLSSCSSPALRSVLGTGANGKVPVLRPLKCAAVNKKTDTQKDIKPHLKHYHLPTINRKGGEY.

In terms of domain architecture, Protein kinase spans 4–285; sequence YKAIGKIGEG…AHQALQHPYF (282 aa). ATP-binding positions include 10 to 18 and K33; that span reads IGEGTFSEV. The active-site Proton acceptor is D128. Residues 311–322 are compositionally biased toward polar residues; it reads PESSSHNWSFSQ. A disordered region spans residues 311–344; the sequence is PESSSHNWSFSQEGRKQKQSLRHEEGHARRQGPT. A compositionally biased stretch (basic and acidic residues) spans 323-338; sequence EGRKQKQSLRHEEGHA.

This sequence belongs to the protein kinase superfamily. CMGC Ser/Thr protein kinase family. CDC2/CDKX subfamily. The cofactor is Mg(2+). In terms of processing, autophosphorylated. In terms of tissue distribution, highly expressed in testis, and less in kidney, brain and lung.

It is found in the cytoplasm. The protein resides in the cell projection. It localises to the cilium. Its subcellular location is the nucleus. The enzyme catalyses L-seryl-[protein] + ATP = O-phospho-L-seryl-[protein] + ADP + H(+). It carries out the reaction L-threonyl-[protein] + ATP = O-phospho-L-threonyl-[protein] + ADP + H(+). Its activity is regulated as follows. Phosphorylation appears to increase the enzymatic activity. Able to phosphorylate several exogenous substrates and to undergo autophosphorylation. Negatively regulates cilium length in a cAMP and mTORC1 signaling-dependent manner. The protein is MAPK/MAK/MRK overlapping kinase (Mok) of Mus musculus (Mouse).